Reading from the N-terminus, the 103-residue chain is Large ribosomal subunit protein bL21 (103 aa).

It belongs to the bacterial ribosomal protein bL21 family. In terms of assembly, part of the 50S ribosomal subunit. Contacts protein L20.

Functionally, this protein binds to 23S rRNA in the presence of protein L20. The sequence is that of Large ribosomal subunit protein bL21 from Saccharophagus degradans (strain 2-40 / ATCC 43961 / DSM 17024).